A 429-amino-acid chain; its full sequence is Metacaspase-1A (429 aa).

The segment at 1–68 (MQHHHQGSYG…PQHNGGQMYG (68 aa)) is disordered. The span at 8 to 19 (SYGGGGGGGGYP) shows a compositional bias: gly residues. A compositionally biased stretch (low complexity) spans 20 to 45 (GQAYREQNPYGYGQQSPQQGYGAPQQ). A compositionally biased stretch (polar residues) spans 46-62 (HNGYNQPPSGYGQPQHN). Active-site residues include His-220 and Cys-276.

Belongs to the peptidase C14B family.

Its function is as follows. Involved in cell death (apoptosis). The chain is Metacaspase-1A (casA) from Aspergillus clavatus (strain ATCC 1007 / CBS 513.65 / DSM 816 / NCTC 3887 / NRRL 1 / QM 1276 / 107).